Here is a 188-residue protein sequence, read N- to C-terminus: Probable nicotinate-nucleotide adenylyltransferase (188 aa).

The protein belongs to the NadD family.

The catalysed reaction is nicotinate beta-D-ribonucleotide + ATP + H(+) = deamido-NAD(+) + diphosphate. Its pathway is cofactor biosynthesis; NAD(+) biosynthesis; deamido-NAD(+) from nicotinate D-ribonucleotide: step 1/1. Its function is as follows. Catalyzes the reversible adenylation of nicotinate mononucleotide (NaMN) to nicotinic acid adenine dinucleotide (NaAD). In Listeria monocytogenes serotype 4b (strain F2365), this protein is Probable nicotinate-nucleotide adenylyltransferase.